The chain runs to 129 residues: LEM domain-containing protein 1 (129 aa).

The LEM domain maps to 1-45; sequence MVDVKCLSDYELHKHLMKLGFTPGPILPSTRKTYEKKLVQLLASP. The interval 45–129 is disordered; the sequence is PPWKPPVMKR…RAPRTTSHGA (85 aa). Basic and acidic residues predominate over residues 83-97; the sequence is SLKKTTLDATRDPRA.

In Mus musculus (Mouse), this protein is LEM domain-containing protein 1 (Lemd1).